The chain runs to 883 residues: MSNTTPMMQQYLKIKSQYQDCLLFFRLGDFYEMFFEDAKEASRVLEITLTKRDAKKENPIPMCGVPYHSANSYIETLINNGYKVAICEQMEDPKQTKGMVKREVVRVVTPGTVMEQGGMDENQNNYILSFIKQDSNYALSYCDISTGELKATQIEDEDTLINEIVTINPNEIVVNQEIDENLKKQIYLTTETITIRESISDASYEVNQLTNNHMYLATQLLLDYVYHTQKRDLSHLETAITYAAVDFMKMDYYAKRNLELTESIRLKSKKGTLLWLMDETKTPMGARRLKQWIDRPLINKERIEERLSIVESFMNHFIERDTLRGYLNQVYDIERLVGRVSYGNVNARDLIQLKHSISEIPNIKSLLESMNDVASNQFSSLEPLEDLLQVLEDSLIEEPPISIKDGGLFKQGFSKQLDEYLEASKNGKDWLAQLQAKERERTGIKSLKISFNKVFGYFIEITRANLQGFEPSKFGYHRKQTLSNAERFITDELKEKEDIILGAEDKAVDLEYQLFVRLREHIKTYTERLQKQAKIISELDCLQSFAEIAQKYNYVKPEFSDNKTLSLENSRHPVVERVMDYNDYVPNDCKLDKDNFIYLITGPNMSGKSTYMRQVAIISIMAQMGAYVPCNKAELPIFDQIFTRIGAADDLVSGKSTFMVEMLEAQKALTYATEDSLIIFDEIGRGTSTYDGLALAQAMIEYVAQTSHAKTLFSTHYHELTTLDQELPSLKNVHVAADEYQGELIFLHKVKDGAVDDSYGIQVAKLANLPDEVINRAQVILDAFEQSQNTSDNEEHSNITVLKDSASVEGFTDDDAQNANNSDKKSQTTKNAIENEFEQASFNLFDSEAMTSEIEEQIKNLNISNMTPIEALLKLSELQNQLR.

Position 602 to 609 (Gly602 to Ser609) interacts with ATP.

The protein belongs to the DNA mismatch repair MutS family.

In terms of biological role, this protein is involved in the repair of mismatches in DNA. It is possible that it carries out the mismatch recognition step. This protein has a weak ATPase activity. This is DNA mismatch repair protein MutS from Staphylococcus haemolyticus (strain JCSC1435).